Consider the following 436-residue polypeptide: Trigger factor (436 aa).

Positions 161 to 246 (DDRVTVDFVG…VNKVEGLSLP (86 aa)) constitute a PPIase FKBP-type domain.

Belongs to the FKBP-type PPIase family. Tig subfamily.

It is found in the cytoplasm. The enzyme catalyses [protein]-peptidylproline (omega=180) = [protein]-peptidylproline (omega=0). In terms of biological role, involved in protein export. Acts as a chaperone by maintaining the newly synthesized protein in an open conformation. Functions as a peptidyl-prolyl cis-trans isomerase. This chain is Trigger factor, found in Pseudoalteromonas atlantica (strain T6c / ATCC BAA-1087).